Consider the following 48-residue polypeptide: Large ribosomal subunit protein bL33A (48 aa).

The protein belongs to the bacterial ribosomal protein bL33 family.

This Streptococcus agalactiae serotype V (strain ATCC BAA-611 / 2603 V/R) protein is Large ribosomal subunit protein bL33A.